The primary structure comprises 315 residues: High mobility group protein hmg-12 (315 aa).

The disordered stretch occupies residues 57–315; sequence VKNETDSEAV…AIDAFFDGSD (259 aa). The segment covering 77–86 has biased composition (polar residues); that stretch reads ANDSPANTND. Positions 118-128 form a DNA-binding region, a.T hook 1; the sequence is PVKKGRGRPIK. Low complexity-rich tracts occupy residues 147-160 and 196-205; these read AQTP…IDTA and AADTDAIDTA.

Belongs to the HMGA family.

It is found in the nucleus. Its function is as follows. Transcriptional regulator. Binds to specific sequence motifs in regulatory elements. May recruit transcription factors, or may induce structural changes in chromatin, to thereby modulate embryonic expression of ATP-dependent chaperone cdc-48.1. The sequence is that of High mobility group protein hmg-12 from Caenorhabditis elegans.